The following is a 1482-amino-acid chain: MQRSPLEKANFLSKLFFSWTRPILRKGFRQRLELSDIYQIPLSNSADYLSENLEREWDRELASKKKPKLINALRRCFFWRFVFHGIILYLGEVTKAVQPLLLGRIIASYDPDNKVERSIAIYLGIGLCLLFIVRTLLLHPAIFGLHHMGMQMRIALFSLIYKKTLKLSSRVLDKISTGQLISLLSNNLNKFDEGLALAHFVWIVPLQVVLLMGLLWDLLQASAFCGLAFLIVLALFQAWLGQMMMKYRERRAGKINERLVITSEMIDNIQSVKAYCWEEAMEKMIENLRETELKLTRKTAYVRYFNSSAFFFSGFFVVFLAVLPYALIKGIILRKIFTTISFCIVLRMAVTRQFPWAVQTWYDSLGAINKIQDFLQKEEYKTLEYNLTTTDVVMENITAFWDEGFGELFVKAKQNNSDVKMSNGDNGLFFSNFSLLGTPVLKNISFKIEKGQLLAVAGSTGAGKTSLLMMIMGELEPSEGKIKHSGRISFCSQFSWIMPGTIKENIIFGVSYDEYRYRSVIKACQLEEDISKFAEKDNTVLGEGGITLSGGQRARISLARAIYKDADLYLLDSPFGYLDVLTEKEIFESCVCKLMANKTRILITSKMEHLKKADKILILHEGSCYFYGAFSELQNLRPDFSSKLMGYDSFDQFSAERRSSILTETLRRFSIEGDTAVSWNEGKKQSFKQTGDFGERRKNSILNPLNSIRKFSVVQKGQPQMNGIEENDDEPLERRLSLVPDSEQGEAILPRSNIINTGPTFQGRNRRQSVLNLMTRPSISQGQNMFKTGNAARKMSMAPQSKLSEIDIYSRRLSQDSGMDISDEINEEDLKEWFFDDVENIPAVTTWNTYLRYITIHKNLVFVLIWCLVIFLVEVAASLVGLWLLEDISFKDKTNGTNGANNTFPVIITDTSKYYLFYIYVGIADTFFALGIFRGLPLVHTLISVSKILHHKMLYSVLKAPMSTFNTLKPGGILNRFSKDIAILDDLLPLTIFDFIQLILIVVGALIVVSAIRPYIFLATVPVIIAFIMLRAYFLQTSQQLKQLESEARTPIFTHLVTSLKGLWTLRAFGRQPYFETLFHKALNLHTASWFLYLSTLRWFQMRIELVFVIFFIAVTFISILTTGDGEGRVGILLTLAMNIMSTLQWAVNSSIDVDSLMRSVSRVFKFIDMPTEEPLPAKPTKSLKKNQLSQVLIIENEHVNKENNWPSGGQMIVKDLTAKYTDGGNAVLENISFSISPGQRVGLLGRTGSGKSTLLAAFLRLLNTEGEMQIDGVSWDSIPLQKWRKAFGVIPQKVFIFSGTFRKNLDPYGQWSDHELWKVADEVGLKSVIEQFPGKLDFVLVDGGYVLSHGHKQLICLARSVLSKAKILLLDEPSAHLDPITYQIIRRVLKNAFANCTVILSEHRIEAMLECQRFLVIEDNKVRQYESIQKLVNEKSLYRQAISHSDRMKLFPHRNSSRHKSLAKITALKEETEEEVQETRL.

Residues 1-77 (MQRSPLEKAN…KLINALRRCF (77 aa)) lie on the Cytoplasmic side of the membrane. The chain crosses the membrane as a helical span at residues 78-98 (FWRFVFHGIILYLGEVTKAVQ). The region spanning 81–365 (FVFHGIILYL…WAVQTWYDSL (285 aa)) is the ABC transmembrane type-1 1 domain. Residues 99–122 (PLLLGRIIASYDPDNKVERSIAIY) lie on the Extracellular side of the membrane. Residues 123–146 (LGIGLCLLFIVRTLLLHPAIFGLH) form a helical membrane-spanning segment. Residues 147–195 (HMGMQMRIALFSLIYKKTLKLSSRVLDKISTGQLISLLSNNLNKFDEGL) are Cytoplasmic-facing. The helical transmembrane segment at 196 to 216 (ALAHFVWIVPLQVVLLMGLLW) threads the bilayer. Residues 217–222 (DLLQAS) lie on the Extracellular side of the membrane. A helical transmembrane segment spans residues 223-243 (AFCGLAFLIVLALFQAWLGQM). The Cytoplasmic segment spans residues 244–298 (MMKYRERRAGKINERLVITSEMIDNIQSVKAYCWEEAMEKMIENLRETELKLTRK). The chain crosses the membrane as a helical span at residues 299–319 (TAYVRYFNSSAFFFSGFFVVF). At 320 to 339 (LAVLPYALIKGIILRKIFTT) the chain is on the extracellular side. A helical transmembrane segment spans residues 340–358 (ISFCIVLRMAVTRQFPWAV). At 359–859 (QTWYDSLGAI…YLRYITIHKN (501 aa)) the chain is on the cytoplasmic side. ATP contacts are provided by residues W401, S434, 458-465 (GSTGAGKT), and Q493. Positions 423-646 (NGDNGLFFSN…RPDFSSKLMG (224 aa)) constitute an ABC transporter 1 domain. A lipid anchor (S-palmitoyl cysteine) is attached at C524. Phosphoserine occurs at positions 549 and 660. Residues 654-832 (SAERRSSILT…DEINEEDLKE (179 aa)) form a disordered R region region. S670 is modified (phosphoserine; by PKA). Residue S686 is modified to Phosphoserine. K688 participates in a covalent cross-link: Glycyl lysine isopeptide (Lys-Gly) (interchain with G-Cter in ubiquitin). Residues S700, S712, S737, S769, S796, and S814 each carry the phosphoserine modification. Residues 860–880 (LVFVLIWCLVIFLVEVAASLV) traverse the membrane as a helical segment. In terms of domain architecture, ABC transmembrane type-1 2 spans 860–1156 (LVFVLIWCLV…AVNSSIDVDS (297 aa)). Residues 881 to 919 (GLWLLEDISFKDKTNGTNGANNTFPVIITDTSKYYLFYI) are Extracellular-facing. N-linked (GlcNAc...) asparagine glycosylation is found at N895 and N901. A discontinuously helical transmembrane segment spans residues 920–940 (YVGIADTFFALGIFRGLPLVH). Topologically, residues 941-991 (TLISVSKILHHKMLYSVLKAPMSTFNTLKPGGILNRFSKDIAILDDLLPLT) are cytoplasmic. The chain crosses the membrane as a helical span at residues 992–1012 (IFDFIQLILIVVGALIVVSAI). Residues 1013-1014 (RP) lie on the Extracellular side of the membrane. A helical transmembrane segment spans residues 1015-1035 (YIFLATVPVIIAFIMLRAYFL). Topologically, residues 1036–1096 (QTSQQLKQLE…TASWFLYLST (61 aa)) are cytoplasmic. The chain crosses the membrane as a helical span at residues 1097 to 1117 (LRWFQMRIELVFVIFFIAVTF). The Extracellular portion of the chain corresponds to 1118-1131 (ISILTTGDGEGRVG). The helical transmembrane segment at 1132–1152 (ILLTLAMNIMSTLQWAVNSSI) threads the bilayer. The Cytoplasmic portion of the chain corresponds to 1153–1482 (DVDSLMRSVS…TEEEVQETRL (330 aa)). An ABC transporter 2 domain is found at 1212–1445 (MIVKDLTAKY…KSLYRQAISH (234 aa)). ATP contacts are provided by residues Y1221 and 1246 to 1253 (GRTGSGKS). The segment at 1388-1482 (RVLKNAFANC…TEEEVQETRL (95 aa)) is interaction with GORASP2. C1397 carries S-palmitoyl cysteine lipidation. Phosphoserine occurs at positions 1446 and 1458. Residues 1480 to 1482 (TRL) carry the PDZ-binding motif.

Belongs to the ABC transporter superfamily. ABCC family. CFTR transporter (TC 3.A.1.202) subfamily. In terms of assembly, monomer; does not require oligomerization for channel activity. May form oligomers in the membrane. Interacts with SLC26A3, SLC26A6 and NHERF1. Interacts with SHANK2. Interacts with MYO6. Interacts (via C-terminus) with GOPC (via PDZ domain); this promotes CFTR internalization and thereby decreases channel activity. Interacts with SLC4A7 through NHERF1. Found in a complex with MYO5B and RAB11A. Interacts with ANO1. Interacts with SLC26A8. Interacts with AHCYL1; the interaction increases CFTR activity. Interacts with CSE1L. The core-glycosylated form interacts with GORASP2 (via PDZ GRASP-type 1 domain) in respone to ER stress. Interacts with MARCHF2; the interaction leads to CFTR ubiqtuitination and degradation. Interacts with ADGRG2. In terms of processing, N-glycosylated. Post-translationally, phosphorylated; cAMP treatment promotes phosphorylation and activates the channel. Dephosphorylation decreases the ATPase activity (in vitro). Phosphorylation at PKA sites activates the channel. Phosphorylation at PKC sites enhances the response to phosphorylation by PKA. Phosphorylated by AMPK; this inhibits channel activity. Ubiquitinated, leading to its degradation in the lysosome. Deubiquitination by USP10 in early endosomes enhances its endocytic recycling to the cell membrane. Ubiquitinated by RNF185 during ER stress. Ubiquitinated by MARCHF2.

The protein localises to the apical cell membrane. Its subcellular location is the early endosome membrane. It localises to the cell membrane. The protein resides in the recycling endosome membrane. It is found in the endoplasmic reticulum membrane. The protein localises to the nucleus. The catalysed reaction is ATP + H2O + closed Cl(-) channel = ADP + phosphate + open Cl(-) channel.. It carries out the reaction chloride(in) = chloride(out). It catalyses the reaction hydrogencarbonate(in) = hydrogencarbonate(out). The enzyme catalyses ATP + H2O = ADP + phosphate + H(+). In terms of biological role, epithelial ion channel that plays an important role in the regulation of epithelial ion and water transport and fluid homeostasis. Mediates the transport of chloride ions across the cell membrane. Possesses an intrinsic ATPase activity and utilizes ATP to gate its channel; the passive flow of anions through the channel is gated by cycles of ATP binding and hydrolysis by the ATP-binding domains. The ion channel is also permeable to HCO(3)(-); selectivity depends on the extracellular chloride concentration. Exerts its function also by modulating the activity of other ion channels and transporters. Contributes to the regulation of the pH and the ion content of the epithelial fluid layer. Modulates the activity of the epithelial sodium channel (ENaC) complex, in part by regulating the cell surface expression of the ENaC complex. May regulate bicarbonate secretion and salvage in epithelial cells by regulating the transporter SLC4A7. Can inhibit the chloride channel activity of ANO1. Plays a role in the chloride and bicarbonate homeostasis during sperm epididymal maturation and capacitation. This chain is Cystic fibrosis transmembrane conductance regulator, found in Didelphis virginiana (North American opossum).